The following is a 31-amino-acid chain: Cycloviolacin-O19 (31 aa).

The cyclopeptide (Gly-Asp) cross-link spans 1–31 (GTLPCGESCVWIPCISSVVGCSCKSKVCYKD). 3 cysteine pairs are disulfide-bonded: Cys5–Cys21, Cys9–Cys23, and Cys14–Cys28.

This is a cyclic peptide. As to expression, expressed in petioles and runners but not in leaves, petals and roots (at protein level).

Its function is as follows. Probably participates in a plant defense mechanism. In Viola odorata (Sweet violet), this protein is Cycloviolacin-O19.